The following is a 263-amino-acid chain: MRVAVSGFKGRMGHEVVKTVLREADLELVAVLDHEPKEKNINEIVEFSSLDVPVFGNLSEMLEEIKPDCVVDFTTPKVGYSNTKTILEHGVRAVVGTTGFTPEQISELRSIAESKKIGALIAPNFAVGAVLMMQFAQKAAKYFPNVEIIELHHDNKLDAPSGTAVKTAEMMAETREFVKQGAADEVELIEGARGAEYEGMRIHSVRLPGLVAHQEVIFGAEGQGLTIRHDSYDRISFMSGVALSVRKTKELETLIYGLENILD.

NAD(+) is bound by residues 7–12, 96–98, and 122–125; these read GFKGRM, GTT, and APNF. Residue His152 is the Proton donor/acceptor of the active site. A (S)-2,3,4,5-tetrahydrodipicolinate-binding site is contributed by His153. Catalysis depends on Lys156, which acts as the Proton donor. Residue 162–163 participates in (S)-2,3,4,5-tetrahydrodipicolinate binding; it reads GT.

This sequence belongs to the DapB family.

It localises to the cytoplasm. The enzyme catalyses (S)-2,3,4,5-tetrahydrodipicolinate + NAD(+) + H2O = (2S,4S)-4-hydroxy-2,3,4,5-tetrahydrodipicolinate + NADH + H(+). It carries out the reaction (S)-2,3,4,5-tetrahydrodipicolinate + NADP(+) + H2O = (2S,4S)-4-hydroxy-2,3,4,5-tetrahydrodipicolinate + NADPH + H(+). Its pathway is amino-acid biosynthesis; L-lysine biosynthesis via DAP pathway; (S)-tetrahydrodipicolinate from L-aspartate: step 4/4. Its function is as follows. Catalyzes the conversion of 4-hydroxy-tetrahydrodipicolinate (HTPA) to tetrahydrodipicolinate. This Listeria monocytogenes serotype 4b (strain F2365) protein is 4-hydroxy-tetrahydrodipicolinate reductase.